We begin with the raw amino-acid sequence, 741 residues long: DNA ligase (741 aa).

NAD(+) is bound by residues 78–82 (DADYD), 127–128 (SL), and E161. K163 (N6-AMP-lysine intermediate) is an active-site residue. R184, E219, K335, and K359 together coordinate NAD(+). Zn(2+) contacts are provided by C464, C467, C482, and C488. The BRCT domain maps to 662 to 741 (VGDSPVAGKT…DAWRVLAGLA (80 aa)).

Belongs to the NAD-dependent DNA ligase family. LigA subfamily. The cofactor is Mg(2+). It depends on Mn(2+) as a cofactor.

It carries out the reaction NAD(+) + (deoxyribonucleotide)n-3'-hydroxyl + 5'-phospho-(deoxyribonucleotide)m = (deoxyribonucleotide)n+m + AMP + beta-nicotinamide D-nucleotide.. Its function is as follows. DNA ligase that catalyzes the formation of phosphodiester linkages between 5'-phosphoryl and 3'-hydroxyl groups in double-stranded DNA using NAD as a coenzyme and as the energy source for the reaction. It is essential for DNA replication and repair of damaged DNA. The chain is DNA ligase from Dinoroseobacter shibae (strain DSM 16493 / NCIMB 14021 / DFL 12).